The chain runs to 454 residues: Kynurenine 3-monooxygenase (454 aa).

Belongs to the aromatic-ring hydroxylase family. KMO subfamily. It depends on FAD as a cofactor.

It carries out the reaction L-kynurenine + NADPH + O2 + H(+) = 3-hydroxy-L-kynurenine + NADP(+) + H2O. It functions in the pathway cofactor biosynthesis; NAD(+) biosynthesis; quinolinate from L-kynurenine: step 1/3. Functionally, catalyzes the hydroxylation of L-kynurenine (L-Kyn) to form 3-hydroxy-L-kynurenine (L-3OHKyn). Required for synthesis of quinolinic acid. In Salinispora arenicola (strain CNS-205), this protein is Kynurenine 3-monooxygenase.